Consider the following 126-residue polypeptide: Holo-[acyl-carrier-protein] synthase (126 aa).

Mg(2+) contacts are provided by Asp-9 and Glu-58.

This sequence belongs to the P-Pant transferase superfamily. AcpS family. It depends on Mg(2+) as a cofactor.

It is found in the cytoplasm. The enzyme catalyses apo-[ACP] + CoA = holo-[ACP] + adenosine 3',5'-bisphosphate + H(+). Its function is as follows. Transfers the 4'-phosphopantetheine moiety from coenzyme A to a Ser of acyl-carrier-protein. In Cronobacter sakazakii (strain ATCC BAA-894) (Enterobacter sakazakii), this protein is Holo-[acyl-carrier-protein] synthase.